We begin with the raw amino-acid sequence, 479 residues long: Ribulose bisphosphate carboxylase large chain (479 aa).

Positions Met-1–Ser-2 are excised as a propeptide. Residue Pro-3 is modified to N-acetylproline. At Lys-14 the chain carries N6,N6,N6-trimethyllysine. Residues Asn-123 and Thr-173 each contribute to the substrate site. The Proton acceptor role is filled by Lys-175. Lys-177 contacts substrate. Residues Lys-201, Asp-203, and Glu-204 each coordinate Mg(2+). An N6-carboxylysine modification is found at Lys-201. His-294 acts as the Proton acceptor in catalysis. 3 residues coordinate substrate: Arg-295, His-327, and Ser-379.

Belongs to the RuBisCO large chain family. Type I subfamily. In terms of assembly, heterohexadecamer of 8 large chains and 8 small chains; disulfide-linked. The disulfide link is formed within the large subunit homodimers. Mg(2+) serves as cofactor. The disulfide bond which can form in the large chain dimeric partners within the hexadecamer appears to be associated with oxidative stress and protein turnover.

It localises to the plastid. The protein localises to the chloroplast. The enzyme catalyses 2 (2R)-3-phosphoglycerate + 2 H(+) = D-ribulose 1,5-bisphosphate + CO2 + H2O. The catalysed reaction is D-ribulose 1,5-bisphosphate + O2 = 2-phosphoglycolate + (2R)-3-phosphoglycerate + 2 H(+). Its function is as follows. RuBisCO catalyzes two reactions: the carboxylation of D-ribulose 1,5-bisphosphate, the primary event in carbon dioxide fixation, as well as the oxidative fragmentation of the pentose substrate in the photorespiration process. Both reactions occur simultaneously and in competition at the same active site. In Ananas comosus (Pineapple), this protein is Ribulose bisphosphate carboxylase large chain.